A 265-amino-acid polypeptide reads, in one-letter code: Neuronal membrane glycoprotein M6-b (265 aa).

The chain crosses the membrane as a helical span at residues 31-51 (GGVPYASLVATILCFSGVALF). Residue asparagine 73 is glycosylated (N-linked (GlcNAc...) asparagine). Helical transmembrane passes span 90-110 (VIYG…AEGF) and 136-156 (FVFL…FSAV). The N-linked (GlcNAc...) asparagine glycan is linked to asparagine 177. Residues 224-244 (LFIVACAGAGATVIALLIYMM) form a helical membrane-spanning segment. Serine 257 carries the phosphoserine modification.

This sequence belongs to the myelin proteolipid protein family. Interacts with SERT. As to expression, highly expressed in the ventral medullary surface, moderately in the cerebral cortex and cerebellum, poorly in lung and kidney, and not at all in heart, skeletal muscle, liver, stomach or stomach.

Its subcellular location is the membrane. The protein localises to the cell membrane. In terms of biological role, may be involved in neural development. Involved in regulation of osteoblast function and bone formation. Involved in matrix vesicle release by osteoblasts; this function seems to involve maintenance of the actin cytoskeleton. May be involved in cellular trafficking of SERT and thereby in regulation of serotonin uptake. The protein is Neuronal membrane glycoprotein M6-b (Gpm6b) of Rattus norvegicus (Rat).